The following is a 537-amino-acid chain: CTP synthase (537 aa).

The tract at residues 1–268 (MGETKYIFVT…DSTILEKMGL (268 aa)) is amidoligase domain. Serine 15 is a CTP binding site. Serine 15 serves as a coordination point for UTP. 16-21 (SLGKGI) serves as a coordination point for ATP. Tyrosine 56 lines the L-glutamine pocket. An ATP-binding site is contributed by aspartate 73. Aspartate 73 and glutamate 143 together coordinate Mg(2+). CTP is bound by residues 150–152 (DIE), 189–194 (KTKPTQ), and lysine 225. UTP contacts are provided by residues 189-194 (KTKPTQ) and lysine 225. A Glutamine amidotransferase type-1 domain is found at 296–537 (NIALVGKYDL…VKAAIENEKN (242 aa)). An L-glutamine-binding site is contributed by glycine 357. Cysteine 384 acts as the Nucleophile; for glutamine hydrolysis in catalysis. Residues 385 to 388 (LGMQ), glutamate 408, and arginine 465 each bind L-glutamine. Active-site residues include histidine 510 and glutamate 512.

The protein belongs to the CTP synthase family. Homotetramer.

It carries out the reaction UTP + L-glutamine + ATP + H2O = CTP + L-glutamate + ADP + phosphate + 2 H(+). The enzyme catalyses L-glutamine + H2O = L-glutamate + NH4(+). The catalysed reaction is UTP + NH4(+) + ATP = CTP + ADP + phosphate + 2 H(+). It functions in the pathway pyrimidine metabolism; CTP biosynthesis via de novo pathway; CTP from UDP: step 2/2. With respect to regulation, allosterically activated by GTP, when glutamine is the substrate; GTP has no effect on the reaction when ammonia is the substrate. The allosteric effector GTP functions by stabilizing the protein conformation that binds the tetrahedral intermediate(s) formed during glutamine hydrolysis. Inhibited by the product CTP, via allosteric rather than competitive inhibition. Its function is as follows. Catalyzes the ATP-dependent amination of UTP to CTP with either L-glutamine or ammonia as the source of nitrogen. Regulates intracellular CTP levels through interactions with the four ribonucleotide triphosphates. The protein is CTP synthase of Bacteroides thetaiotaomicron (strain ATCC 29148 / DSM 2079 / JCM 5827 / CCUG 10774 / NCTC 10582 / VPI-5482 / E50).